Consider the following 1769-residue polypeptide: Gamma-tubulin complex component 6 (1769 aa).

3 disordered regions span residues 809–842 (EAQQ…HSCD), 859–881 (STPS…PFST), and 1284–1360 (TVCS…AEAR). Residues 820 to 831 (FPSTGSQVTSTG) show a composition bias toward polar residues. Residues 1314 to 1326 (PEEKGPGKSRDAE) show a composition bias toward basic and acidic residues. A compositionally biased stretch (polar residues) spans 1332-1343 (LPSSSQEDTAVP).

The protein belongs to the TUBGCP family. As to quaternary structure, component of the gamma-tubulin ring complex (gTuRC) consisting of TUBGCP2, TUBGCP3, TUBGCP4, TUBGCP5 and TUBGCP6 and gamma-tubulin TUBG1 or TUBG2. TUBGCP2, TUBGCP3, TUBGCP4, TUBGCP5 and TUBGCP6 assemble in a 5:5:2:1:1 stoichiometry; each is associated with a gamma-tubulin, thereby arranging 14 gamma-tubulins in a helical manner. Gamma-tubulin at the first position is blocked by TUBGCP3 at the last position, allowing 13 protafilaments to grow into a microtubule. The gTuRC (via TUBGCP3 and TUBGCP6) interacts with ACTB and MZT1; the interactions form a luminal bridge that stabilizes the initial structure during complex assembly. The gTuRC (via TUBGCP2) interacts with MZT2A/MZT2B and CDK5RAP2 (via CM1 motif); the interactions play a role in gTuRC activation.

Its subcellular location is the cytoplasm. The protein resides in the cytoskeleton. It is found in the microtubule organizing center. It localises to the centrosome. In terms of biological role, component of the gamma-tubulin ring complex (gTuRC) which mediates microtubule nucleation. The gTuRC regulates the minus-end nucleation of alpha-beta tubulin heterodimers that grow into microtubule protafilaments, a critical step in centrosome duplication and spindle formation. This Mus musculus (Mouse) protein is Gamma-tubulin complex component 6 (Tubgcp6).